A 513-amino-acid polypeptide reads, in one-letter code: ATP synthase subunit alpha (513 aa).

ATP is bound at residue 169 to 176; that stretch reads GDRQTGKT.

It belongs to the ATPase alpha/beta chains family. F-type ATPases have 2 components, CF(1) - the catalytic core - and CF(0) - the membrane proton channel. CF(1) has five subunits: alpha(3), beta(3), gamma(1), delta(1), epsilon(1). CF(0) has three main subunits: a(1), b(2) and c(9-12). The alpha and beta chains form an alternating ring which encloses part of the gamma chain. CF(1) is attached to CF(0) by a central stalk formed by the gamma and epsilon chains, while a peripheral stalk is formed by the delta and b chains.

The protein localises to the cell inner membrane. It catalyses the reaction ATP + H2O + 4 H(+)(in) = ADP + phosphate + 5 H(+)(out). Functionally, produces ATP from ADP in the presence of a proton gradient across the membrane. The alpha chain is a regulatory subunit. This Haemophilus influenzae (strain 86-028NP) protein is ATP synthase subunit alpha.